Reading from the N-terminus, the 434-residue chain is MHVIVLGSGVIGTTTAYYLARQGAQVTVLERRAGPADETSYGNAGQVSPGYSTPWAAPGIPLKALKWMFQKHAPLAIRADGSFYQWRWLAAMLANCSAGRYSVNKERMLRLAEYSRDCLRTLRADTGIQYEQRTQGTLQLFRTAAQMEAARRDIAVLEECGVPYELLDRNRLPTAEPALARALDKLAGGLRLPNDETGDCRRFTLQLADKAKALGVQFRFNQQVEGLDVRGGQVAGVRVGGEQLAADRYVAAFGSYTRGFLRPLGLDLPVYPVKGYSLTIPMTDESAAPVSTILDETYKVAVTRFDQRIRVGGMAELAGFDLRLKEARRKTLELVVNDLFPGSGAVEQAEFWTGLRPMTPDSTPIIGATKYGNLFLNTGHGTLGWTMACGSGQLVADQVCGRQPAIRADDLALSRYGAGGQAGGGVARAQHNAA.

3 to 17 (VIVLGSGVIGTTTAY) contacts FAD.

Belongs to the DadA oxidoreductase family. It depends on FAD as a cofactor.

It catalyses the reaction a D-alpha-amino acid + A + H2O = a 2-oxocarboxylate + AH2 + NH4(+). Its function is as follows. Oxidative deamination of D-amino acids. This is D-amino acid dehydrogenase from Bordetella bronchiseptica (strain ATCC BAA-588 / NCTC 13252 / RB50) (Alcaligenes bronchisepticus).